The primary structure comprises 593 residues: Probable metalloprotease ARX1 (593 aa).

This sequence belongs to the peptidase M24 family. Component of the nucleoplasmic and cytoplasmic pre-60S ribosomal particles. Interacts directly with REI1.

The protein localises to the cytoplasm. It is found in the nucleus. Its function is as follows. Probable metalloprotease involved in proper assembly of pre-ribosomal particles during the biogenesis of the 60S ribosomal subunit. Accompanies the pre-60S particles to the cytoplasm. This chain is Probable metalloprotease ARX1 (ARX1), found in Saccharomyces cerevisiae (strain ATCC 204508 / S288c) (Baker's yeast).